The sequence spans 392 residues: GDSL esterase/lipase ESM1 (392 aa).

A signal peptide spans 1–28 (MADNLNLVSVLGVLLVLTIFHNPIIVYA). S43 acts as the Nucleophile in catalysis. Residues N146, N166, and N290 are each glycosylated (N-linked (GlcNAc...) asparagine). Residues D324 and H327 contribute to the active site.

Belongs to the 'GDSL' lipolytic enzyme family.

The protein localises to the secreted. In terms of biological role, represses or inhibits nitriles production from methionine-derived and from indol-3-ylmethyl glucosinolates. Favors isothiocyanate production. This Arabidopsis thaliana (Mouse-ear cress) protein is GDSL esterase/lipase ESM1 (ESM1).